We begin with the raw amino-acid sequence, 207 residues long: Vascular endothelial growth factor B (207 aa).

A signal peptide spans Met-1 to Ala-21. Intrachain disulfides connect Cys-47–Cys-89, Cys-78–Cys-122, and Cys-82–Cys-124. Positions Cys-124–Ser-139 are enriched in basic and acidic residues. The tract at residues Cys-124 to Ala-207 is disordered. Positions Pro-174–Ser-201 are enriched in low complexity.

Belongs to the PDGF/VEGF growth factor family. As to quaternary structure, homodimer; disulfide-linked. Can also form heterodimer with VEGF. Post-translationally, VEGF-B186 is O-glycosylated.

Its subcellular location is the secreted. Functionally, growth factor for endothelial cells. VEGF-B167 binds heparin and neuropilin-1 whereas the binding to neuropilin-1 of VEGF-B186 is regulated by proteolysis. This Bos taurus (Bovine) protein is Vascular endothelial growth factor B (VEGFB).